The primary structure comprises 526 residues: Keratin, type I cytoskeletal 10 (526 aa).

Low complexity predominate over residues 1-16 (MSVRFSSNSRQYSSAR). The disordered stretch occupies residues 1–40 (MSVRFSSNSRQYSSARSGGGGGGGGGGSSIRVSSTKSSLG). Residues 1-144 (MSVRFSSNSR…GDGGGLLSGN (144 aa)) are head. A phosphoserine mark is found at S17, S38, S49, S52, and S169. Residues 17–28 (SGGGGGGGGGGS) show a composition bias toward gly residues. The tract at residues 145–180 (EKVTMQNLNDRLASYMNKVRDLEESNYELEGKIKEW) is coil 1A. The region spanning 145–459 (EKVTMQNLND…SLLEGEGGYV (315 aa)) is the IF rod domain. The interval 181-201 (YEKHGNSSQREPRDYSKYYKT) is linker 1. Residues 202 to 293 (IEDLKGQIVN…KNHEEEMKDL (92 aa)) are coil 1B. The interval 294-316 (QNVSTGDVNVEMNAAPGVDLTQL) is linker 12. The tract at residues 317 to 455 (LNNMRNQYEQ…QTYRSLLEGE (139 aa)) is coil 2. The tail stretch occupies residues 456-526 (GGYVGNLQIT…IESETKKHFY (71 aa)).

It belongs to the intermediate filament family. As to quaternary structure, heterotetramer of two type I and two type II keratins. Heterodimer with KRT1. Two heterodimers of KRT1 and KRT10 form a heterotetramer. The KRT10 subunit in the heterotetramer is probably disulfide-linked.

The protein resides in the secreted. It is found in the extracellular space. It localises to the cell surface. Its subcellular location is the cytoplasm. In terms of biological role, plays a role in the establishment of the epidermal barrier on plantar skin. Involved in the maintenance of cell layer development and keratin filament bundles in suprabasal cells of the epithelium. This Rattus norvegicus (Rat) protein is Keratin, type I cytoskeletal 10.